The primary structure comprises 257 residues: tRNA (guanine-N(1)-)-methyltransferase (257 aa).

Residues Gly-112 and 136–141 (LGDYVL) each bind S-adenosyl-L-methionine.

Belongs to the RNA methyltransferase TrmD family. Homodimer.

It localises to the cytoplasm. The enzyme catalyses guanosine(37) in tRNA + S-adenosyl-L-methionine = N(1)-methylguanosine(37) in tRNA + S-adenosyl-L-homocysteine + H(+). Specifically methylates guanosine-37 in various tRNAs. In Salinispora tropica (strain ATCC BAA-916 / DSM 44818 / JCM 13857 / NBRC 105044 / CNB-440), this protein is tRNA (guanine-N(1)-)-methyltransferase.